The following is a 236-amino-acid chain: Phosphoribosylaminoimidazole-succinocarboxamide synthase (236 aa).

This sequence belongs to the SAICAR synthetase family.

It carries out the reaction 5-amino-1-(5-phospho-D-ribosyl)imidazole-4-carboxylate + L-aspartate + ATP = (2S)-2-[5-amino-1-(5-phospho-beta-D-ribosyl)imidazole-4-carboxamido]succinate + ADP + phosphate + 2 H(+). It functions in the pathway purine metabolism; IMP biosynthesis via de novo pathway; 5-amino-1-(5-phospho-D-ribosyl)imidazole-4-carboxamide from 5-amino-1-(5-phospho-D-ribosyl)imidazole-4-carboxylate: step 1/2. This is Phosphoribosylaminoimidazole-succinocarboxamide synthase from Rickettsia bellii (strain OSU 85-389).